The following is a 187-amino-acid chain: Cell division protein SepF (187 aa).

The tract at residues 21-97 is disordered; that stretch reads EVEVPDKQQQ…ATPNNASQES (77 aa). Composition is skewed to polar residues over residues 38–63 and 70–97; these read EQSQ…YTTT and RMSN…SQES.

It belongs to the SepF family. In terms of assembly, homodimer. Interacts with FtsZ.

It localises to the cytoplasm. Cell division protein that is part of the divisome complex and is recruited early to the Z-ring. Probably stimulates Z-ring formation, perhaps through the cross-linking of FtsZ protofilaments. Its function overlaps with FtsA. This is Cell division protein SepF from Staphylococcus aureus (strain MRSA252).